Reading from the N-terminus, the 204-residue chain is E3 ubiquitin-protein ligase MPSR1 (204 aa).

An RING-type; atypical zinc finger spans residues 113–154 (CVICLEEWKSEETVKEMPCKHRFHGGCIEKWLGFHGSCPVCR).

Post-translationally, autoubiquitinated.

The protein resides in the cytoplasm. It carries out the reaction S-ubiquitinyl-[E2 ubiquitin-conjugating enzyme]-L-cysteine + [acceptor protein]-L-lysine = [E2 ubiquitin-conjugating enzyme]-L-cysteine + N(6)-ubiquitinyl-[acceptor protein]-L-lysine.. Its function is as follows. E3 ubiquitin-protein ligase involved in protein quality control (PQC) under proteotoxic stress. Is essential to plant survival under proteotoxic stress. Functions by removing damaged proteins before they form cytotoxic aggregates. Recognizes misfolded proteins selectively and tethers polyubiquitin chains to the proteins directly for subsequent degradation by the 26S proteasome pathway. Targets misfolded proteins independently of cytoplasmic chaperones. Associates with the 26S proteasome and sustains the structural integrity of the proteasome complex at the initial stage of proteotoxic stress. Under normal conditions, MPSR1 becomes highly unstable by its autoubiquitination activity and is stabilized during proteotoxic stress by conjugating ubiquitins on misfolded proteins. The protein is E3 ubiquitin-protein ligase MPSR1 of Arabidopsis thaliana (Mouse-ear cress).